The primary structure comprises 627 residues: Protein fem-1 homolog B (627 aa).

4 ANK repeats span residues 45–74, 87–116, 120–149, and 153–182; these read QRST…VQTQ, DGAT…NVNH, TNST…NISI, and YDNT…DPNA. Residues histidine 185, cysteine 186, and histidine 218 each contribute to the Zn(2+) site. 2 ANK repeats span residues 186 to 215 and 218 to 248; these read CGAT…AIVV and HGMT…DRRS. One copy of the TPR repeat lies at 344 to 377; the sequence is SHPIIYRGAVYADNMEFEQCIKLWLHALHLRQKG. ANK repeat units follow at residues 483–527 and 531–568; these read EGFS…EVNA and EGNS…HTDM.

It belongs to the fem-1 family. As to quaternary structure, component of a CRL2 E3 ubiquitin-protein ligase complex, also named ECS (Elongin BC-CUL2/5-SOCS-box protein) complex, composed of CUL2, Elongin BC (ELOB and ELOC), RBX1 and substrate-specific adapter FEM1B. Homooligomer. Interacts with PPM1F and PHTF1. Interacts with the death domain of FAS/TNFRSF6 and TNFRSF1A. Interacts with CHEK1. Interacts with NKX3-1. Expressed in pancreatic islets, within both beta cells and non-beta cells (at protein level). Highly expressed in adult testis; expressed in all types of spermatogonia. Also expressed in the prostate of neonatal mice.

The protein resides in the cytoplasm. It localises to the nucleus. The protein operates within protein modification; protein ubiquitination. With respect to regulation, activity of the CRL2(FEM1B) complex toward FNIP1 is inhibited by BEX family proteins (BEX1, BEX2, BEX3 and/or BEX4) in absence of reductive stress. Mechanistically, BEX proteins act as pseudosubstrate inhibitors that associate with FEM1B via zinc in absence of reductive stress, thereby preventing association between FEM1B and FNIP1. Functionally, substrate-recognition component of a Cul2-RING (CRL2) E3 ubiquitin-protein ligase complex of the DesCEND (destruction via C-end degrons) pathway, which recognizes a C-degron located at the extreme C terminus of target proteins, leading to their ubiquitination and degradation. The C-degron recognized by the DesCEND pathway is usually a motif of less than ten residues and can be present in full-length proteins, truncated proteins or proteolytically cleaved forms. The CRL2(FEM1B) complex specifically recognizes proteins ending with -Gly-Leu-Asp-Arg, such as CDK5R1, leading to their ubiquitination and degradation. Also acts as a regulator of the reductive stress response by mediating ubiquitination of reduced FNIP1: in response to reductive stress, the CRL2(FEM1B) complex specifically recognizes a conserved Cys degron in FNIP1 when this degron is reduced, leading to FNIP1 degradation and subsequent activation of mitochondria to recalibrate reactive oxygen species (ROS). Mechanistically, recognizes and binds reduced FNIP1 through two interface zinc ions, which act as a molecular glue that recruit reduced FNIP1 to FEM1B. Promotes ubiquitination of GLI1, suppressing GLI1 transcriptional activator activity. Promotes ubiquitination and degradation of ANKRD37. Promotes ubiquitination and degradation of SLBP. Involved in apoptosis by acting as a death receptor-associated protein that mediates apoptosis. Also involved in glucose homeostasis in pancreatic islet. May also act as an adapter/mediator in replication stress-induced signaling that leads to the activation of CHEK1. This chain is Protein fem-1 homolog B, found in Mus musculus (Mouse).